Here is a 484-residue protein sequence, read N- to C-terminus: Transmembrane protein 161B (484 aa).

The chain crosses the membrane as a helical span at residues 108-128 (LVDFTVAATVVYLITELYFCV). Asn-136 carries N-linked (GlcNAc...) asparagine glycosylation. 2 consecutive transmembrane segments (helical) span residues 137–157 (ISVV…FSLT) and 170–190 (SLCI…LIVT). N-linked (GlcNAc...) asparagine glycosylation is present at Asn-204. A run of 4 helical transmembrane segments spans residues 229–249 (FKLI…FPGL), 266–286 (VTQT…LLWV), 368–388 (VFYY…MLLH), and 456–476 (LSFF…FGLF).

Belongs to the TMEM161 family.

The protein resides in the cell membrane. In terms of biological role, essential for maintaining normal cardiac rhythm in the developing heart and for neonatal survival. Inhibits potassium and calcium currents in the cardiomyocytes, this assists in timely action potential repolarization and thereby maintains normal cardiac rhythm. In Danio rerio (Zebrafish), this protein is Transmembrane protein 161B (tmem161b).